The sequence spans 303 residues: Glycine--tRNA ligase alpha subunit (303 aa).

It belongs to the class-II aminoacyl-tRNA synthetase family. As to quaternary structure, tetramer of two alpha and two beta subunits.

Its subcellular location is the cytoplasm. It carries out the reaction tRNA(Gly) + glycine + ATP = glycyl-tRNA(Gly) + AMP + diphosphate. This Escherichia coli (strain K12) protein is Glycine--tRNA ligase alpha subunit (glyQ).